A 90-amino-acid polypeptide reads, in one-letter code: Probable Fe(2+)-trafficking protein (90 aa).

It belongs to the Fe(2+)-trafficking protein family.

Its function is as follows. Could be a mediator in iron transactions between iron acquisition and iron-requiring processes, such as synthesis and/or repair of Fe-S clusters in biosynthetic enzymes. The polypeptide is Probable Fe(2+)-trafficking protein (Polaromonas sp. (strain JS666 / ATCC BAA-500)).